A 309-amino-acid chain; its full sequence is MMILKNKRMLKIGICVGILGLSITSLEAFTGGALQVEAKQKTGQVKHKNQATHKEFSQLEKKFDARVGVYAIDTGTNQTISYRSNERFAFASTYKALAAGVLLQQNSIDTLNEVITFTKEDLVDYSPVTEKHVDTGMKLGEIAEAAVRSSDNTAGNILFNKIGGPKGYEKALRKMGDRVTMSDRFETELNEAIPGDIRDTSTAKRIATNLKAFTVGNALPAEKRKILTEWMKGNATGDKLIRAGVPTDWVVGDKSGAGSYGTRNDIAIVWPPNRAPIIIAILSSKDEKEASYDNQLIAEATEVIVKALK.

An N-terminal signal peptide occupies residues 1–28 (MMILKNKRMLKIGICVGILGLSITSLEA). Residue Ser92 is the Acyl-ester intermediate of the active site. Glu188 functions as the Proton acceptor in the catalytic mechanism. A substrate-binding site is contributed by 254–256 (KSG).

The protein belongs to the class-A beta-lactamase family.

It catalyses the reaction a beta-lactam + H2O = a substituted beta-amino acid. Functionally, this protein is a beta-lactamase with a substrate specificity for penicillins. In Bacillus thuringiensis, this protein is Beta-lactamase (bla).